The primary structure comprises 404 residues: uncharacterized protein (404 aa).

Helical transmembrane passes span 35-55 and 92-112; these read ILFSNIKSILAIIWKYSFTFL and EDIWASTIILGVIIGYLISSI.

Its subcellular location is the membrane. This is an uncharacterized protein from Saccharomyces cerevisiae (strain ATCC 204508 / S288c) (Baker's yeast).